The following is a 632-amino-acid chain: Biosynthetic arginine decarboxylase (632 aa).

Lysine 101 is modified (N6-(pyridoxal phosphate)lysine). Residue 281-291 participates in substrate binding; that stretch reads FDVGGGLGVDY.

This sequence belongs to the Orn/Lys/Arg decarboxylase class-II family. SpeA subfamily. It depends on Mg(2+) as a cofactor. Pyridoxal 5'-phosphate serves as cofactor.

It catalyses the reaction L-arginine + H(+) = agmatine + CO2. Its pathway is amine and polyamine biosynthesis; agmatine biosynthesis; agmatine from L-arginine: step 1/1. Functionally, catalyzes the biosynthesis of agmatine from arginine. This Klebsiella pneumoniae (strain 342) protein is Biosynthetic arginine decarboxylase.